We begin with the raw amino-acid sequence, 837 residues long: PE-PGRS family protein PE_PGRS4 (837 aa).

In terms of domain architecture, PE spans 4 to 94 (VIAAPEVIAA…GAYAAAEAAA (91 aa)). Gly residues predominate over residues 811–825 (NGGKAGGTPGAGGTS). Residues 811–837 (NGGKAGGTPGAGGTSGLIIGENGLNGL) are disordered. Residues 826-837 (GLIIGENGLNGL) are compositionally biased toward low complexity.

Belongs to the mycobacterial PE family. PGRS subfamily.

This Mycobacterium tuberculosis (strain ATCC 25618 / H37Rv) protein is PE-PGRS family protein PE_PGRS4.